Reading from the N-terminus, the 359-residue chain is DNA replication and repair protein RecF (359 aa).

Residue 30–37 (GANGSGKT) coordinates ATP.

It belongs to the RecF family.

The protein resides in the cytoplasm. In terms of biological role, the RecF protein is involved in DNA metabolism; it is required for DNA replication and normal SOS inducibility. RecF binds preferentially to single-stranded, linear DNA. It also seems to bind ATP. The sequence is that of DNA replication and repair protein RecF from Vibrio atlanticus (strain LGP32) (Vibrio splendidus (strain Mel32)).